Consider the following 430-residue polypeptide: Serine--tRNA ligase (430 aa).

237-239 (TAE) contributes to the L-serine binding site. 268-270 (RSE) contacts ATP. Glu-291 is a binding site for L-serine. 355–358 (EISS) is a binding site for ATP. Residue Ser-391 coordinates L-serine.

The protein belongs to the class-II aminoacyl-tRNA synthetase family. Type-1 seryl-tRNA synthetase subfamily. Homodimer. The tRNA molecule binds across the dimer.

The protein resides in the cytoplasm. The catalysed reaction is tRNA(Ser) + L-serine + ATP = L-seryl-tRNA(Ser) + AMP + diphosphate + H(+). The enzyme catalyses tRNA(Sec) + L-serine + ATP = L-seryl-tRNA(Sec) + AMP + diphosphate + H(+). It participates in aminoacyl-tRNA biosynthesis; selenocysteinyl-tRNA(Sec) biosynthesis; L-seryl-tRNA(Sec) from L-serine and tRNA(Sec): step 1/1. Its function is as follows. Catalyzes the attachment of serine to tRNA(Ser). Is also able to aminoacylate tRNA(Sec) with serine, to form the misacylated tRNA L-seryl-tRNA(Sec), which will be further converted into selenocysteinyl-tRNA(Sec). This chain is Serine--tRNA ligase, found in Yersinia pseudotuberculosis serotype O:1b (strain IP 31758).